The chain runs to 154 residues: ATP synthase subunit b (154 aa).

A helical membrane pass occupies residues 9–29 (AIAFVIFVWFCMKYVWPPLMA).

Belongs to the ATPase B chain family. F-type ATPases have 2 components, F(1) - the catalytic core - and F(0) - the membrane proton channel. F(1) has five subunits: alpha(3), beta(3), gamma(1), delta(1), epsilon(1). F(0) has three main subunits: a(1), b(2) and c(10-14). The alpha and beta chains form an alternating ring which encloses part of the gamma chain. F(1) is attached to F(0) by a central stalk formed by the gamma and epsilon chains, while a peripheral stalk is formed by the delta and b chains.

The protein localises to the cell inner membrane. In terms of biological role, f(1)F(0) ATP synthase produces ATP from ADP in the presence of a proton or sodium gradient. F-type ATPases consist of two structural domains, F(1) containing the extramembraneous catalytic core and F(0) containing the membrane proton channel, linked together by a central stalk and a peripheral stalk. During catalysis, ATP synthesis in the catalytic domain of F(1) is coupled via a rotary mechanism of the central stalk subunits to proton translocation. Functionally, component of the F(0) channel, it forms part of the peripheral stalk, linking F(1) to F(0). This chain is ATP synthase subunit b, found in Klebsiella pneumoniae subsp. pneumoniae (strain ATCC 700721 / MGH 78578).